A 971-amino-acid chain; its full sequence is Piwi-like protein 2 (971 aa).

A Symmetric dimethylarginine modification is found at Arg45. Residue Arg74 is modified to Omega-N-methylarginine; by PRMT5; alternate. Symmetric dimethylarginine; by PRMT5; alternate is present on Arg74. Arg83 is modified (omega-N-methylarginine; alternate). A symmetric dimethylarginine; alternate mark is found at Arg83 and Arg95. Arg95 is subject to Omega-N-methylarginine; by PRMT5; alternate. Arg100 carries the post-translational modification Symmetric dimethylarginine; by PRMT5; alternate. Arg100 carries the omega-N-methylarginine; alternate modification. The segment at 102–124 (LSANMVRKDREEPRSSLPDPSVL) is disordered. Symmetric dimethylarginine is present on residues Arg144 and Arg156. The disordered stretch occupies residues 159-200 (SSIGRGMDKPPSAFGLTARDPPRLPQPPALSPTSLHSADPPP). Residue Arg163 is modified to Symmetric dimethylarginine; by PRMT5. The PAZ domain occupies 387 to 500 (SVLDVMHAIY…LLPELSFMTG (114 aa)). Residue Arg549 is modified to Symmetric dimethylarginine; by PRMT5. The Piwi domain occupies 666–957 (MVVCIIMGTR…LAFLSGQILH (292 aa)). Catalysis depends on residues Asp743, Glu781, Asp813, and His946.

Belongs to the argonaute family. Piwi subfamily. As to quaternary structure, interacts with DDX4, MAEL, EIF3A, EIF4E, EIF4G, PRMT5 and WDR77. Associates with EIF4E- and EIF4G-containing m7G cap-binding complexes. Interacts (when methylated on arginine residues) with TDRD1 and TDRKH/TDRD2. Interacts with TDRD12. Component of the PET complex, at least composed of EXD1, PIWIL2, TDRD12 and piRNAs. Interacts with MOV10L1. Interacts with GPAT2. Interacts with Tex19.1 and, probably, Tex19.2. Interacts (via PIWI domain) with BMAL1 and CLOCK. Interacts with GSK3B. Interacts with TEX15. Mg(2+) serves as cofactor. Arginine methylation by PRMT5 is required for the interaction with Tudor domain-containing protein TDRD1 and subsequent localization to the meiotic nuage, also named P granule. As to expression, expressed in adult testis, specifically in spermatocytes and in spermatogonia. Only detected in primordial germ cells of both sexes. Widely expressed in tumors. Also present at early stages of oocyte growth. Present in the mitotic spermatogonia. Not detected in the first stages of meiosis (preleptotene and leptotene). Detected at the late zygotene stage and increases throughout pachytene, declining from this stage onward until expression stops at the early round spermatid stage (at protein level).

The protein resides in the cytoplasm. Functionally, endoribonuclease that plays a central role during spermatogenesis by repressing transposable elements and preventing their mobilization, which is essential for the germline integrity. Plays an essential role in meiotic differentiation of spermatocytes, germ cell differentiation and in self-renewal of spermatogonial stem cells. Its presence in oocytes suggests that it may participate in similar functions during oogenesis in females. Acts via the piRNA metabolic process, which mediates the repression of transposable elements during meiosis by forming complexes composed of piRNAs and Piwi proteins and govern the methylation and subsequent repression of transposons. During piRNA biosynthesis, plays a key role in the piRNA amplification loop, also named ping-pong amplification cycle, by acting as a 'slicer-competent' piRNA endoribonuclease that cleaves primary piRNAs, which are then loaded onto 'slicer-incompetent' PIWIL4. PIWIL2 slicing produces a pre-miRNA intermediate, which is then processed in mature piRNAs, and as well as a 16 nucleotide by-product that is degraded. Required for PIWIL4/MIWI2 nuclear localization and association with secondary piRNAs antisense. Besides their function in transposable elements repression, piRNAs are probably involved in other processes during meiosis such as translation regulation. Indirectly modulates expression of genes such as PDGFRB, SLC2A1, ITGA6, GJA7, THY1, CD9 and STRA8. Represses circadian rhythms by promoting the stability and activity of core clock components BMAL1 and CLOCK by inhibiting GSK3B-mediated phosphorylation and ubiquitination-dependent degradation of these proteins. This Mus musculus (Mouse) protein is Piwi-like protein 2.